The sequence spans 339 residues: Holliday junction branch migration complex subunit RuvB (339 aa).

Positions 2–187 are large ATPase domain (RuvB-L); it reads KDVNEEERII…FGIIEHMQYY (186 aa). ATP is bound by residues Leu-26, Arg-27, Gly-68, Lys-71, Thr-72, Thr-73, 134 to 136, Arg-177, Tyr-187, and Arg-224; that span reads EDF. Mg(2+) is bound at residue Thr-72. Residues 188–258 form a small ATPAse domain (RuvB-S) region; that stretch reads SVEDLEKIIQ…TTKHSLHLLE (71 aa). The head domain (RuvB-H) stretch occupies residues 261–339; that stretch reads DEGLDQTDRK…QLGYPPKDEK (79 aa). The DNA site is built by Arg-316 and Arg-321.

It belongs to the RuvB family. Homohexamer. Forms an RuvA(8)-RuvB(12)-Holliday junction (HJ) complex. HJ DNA is sandwiched between 2 RuvA tetramers; dsDNA enters through RuvA and exits via RuvB. An RuvB hexamer assembles on each DNA strand where it exits the tetramer. Each RuvB hexamer is contacted by two RuvA subunits (via domain III) on 2 adjacent RuvB subunits; this complex drives branch migration. In the full resolvosome a probable DNA-RuvA(4)-RuvB(12)-RuvC(2) complex forms which resolves the HJ.

It localises to the cytoplasm. The enzyme catalyses ATP + H2O = ADP + phosphate + H(+). Its function is as follows. The RuvA-RuvB-RuvC complex processes Holliday junction (HJ) DNA during genetic recombination and DNA repair, while the RuvA-RuvB complex plays an important role in the rescue of blocked DNA replication forks via replication fork reversal (RFR). RuvA specifically binds to HJ cruciform DNA, conferring on it an open structure. The RuvB hexamer acts as an ATP-dependent pump, pulling dsDNA into and through the RuvAB complex. RuvB forms 2 homohexamers on either side of HJ DNA bound by 1 or 2 RuvA tetramers; 4 subunits per hexamer contact DNA at a time. Coordinated motions by a converter formed by DNA-disengaged RuvB subunits stimulates ATP hydrolysis and nucleotide exchange. Immobilization of the converter enables RuvB to convert the ATP-contained energy into a lever motion, pulling 2 nucleotides of DNA out of the RuvA tetramer per ATP hydrolyzed, thus driving DNA branch migration. The RuvB motors rotate together with the DNA substrate, which together with the progressing nucleotide cycle form the mechanistic basis for DNA recombination by continuous HJ branch migration. Branch migration allows RuvC to scan DNA until it finds its consensus sequence, where it cleaves and resolves cruciform DNA. The polypeptide is Holliday junction branch migration complex subunit RuvB (Lactobacillus johnsonii (strain CNCM I-12250 / La1 / NCC 533)).